Here is a 337-residue protein sequence, read N- to C-terminus: Hsp90 co-chaperone Cdc37-like 1 (337 aa).

Residues 1-11 (MEQPWPPPGPW) show a composition bias toward pro residues. The segment at 1 to 42 (MEQPWPPPGPWSLPRAEGEAEEENDLDVFPSSPRCPQLPGGS) is disordered. The tract at residues 2–171 (EQPWPPPGPW…YEQKIRHFGM (170 aa)) is self-association. Phosphoserine is present on residues Ser32 and Ser88. A coiled-coil region spans residues 85-122 (NSESLDQEHAKAQIAVSELRQREEEWRQKEEALVQREK). Residues 147–277 (KDTEDEDKSE…SRVRLYSQSQ (131 aa)) are self-association and interaction with Hsp90. Positions 267–337 (KSRVRLYSQS…DDEPKMMDTV (71 aa)) are interaction with Hsp70. Residues 278 to 337 (SFQPMTVQNHVPHSGVGSIGLLESLPQNPDYLQYSINTALCSLNSVVHKEDDEPKMMDTV) are required for interaction with STIP1.

This sequence belongs to the CDC37 family. As to quaternary structure, self-associates. Forms complexes with Hsp70 and Hsp90. Interacts with CDC37, FKBP4, PPID and STIP1.

It is found in the cytoplasm. Functionally, co-chaperone that binds to numerous proteins and promotes their interaction with Hsp70 and Hsp90. The sequence is that of Hsp90 co-chaperone Cdc37-like 1 (CDC37L1) from Pongo abelii (Sumatran orangutan).